Reading from the N-terminus, the 206-residue chain is Large ribosomal subunit protein uL4 (206 aa).

Positions 46-77 (GTRAQKDREQVRHSTKKPFKQKGTGRARAGMT) are disordered. A compositionally biased stretch (basic residues) spans 58 to 70 (HSTKKPFKQKGTG).

This sequence belongs to the universal ribosomal protein uL4 family. In terms of assembly, part of the 50S ribosomal subunit.

In terms of biological role, one of the primary rRNA binding proteins, this protein initially binds near the 5'-end of the 23S rRNA. It is important during the early stages of 50S assembly. It makes multiple contacts with different domains of the 23S rRNA in the assembled 50S subunit and ribosome. Functionally, forms part of the polypeptide exit tunnel. The chain is Large ribosomal subunit protein uL4 from Polaromonas sp. (strain JS666 / ATCC BAA-500).